A 146-amino-acid chain; its full sequence is Thyroid hormone-inducible hepatic protein (146 aa).

Positions 83–104 (KVAGSEENGTAETEEVEDESAS) are disordered. The segment covering 94–104 (ETEEVEDESAS) has biased composition (acidic residues).

It belongs to the SPOT14 family. Homodimer. Heterodimer with MID1IP1. Interacts with THRB and PLAGL1. Mainly expressed in tissues that synthesize triglycerides.

The protein resides in the nucleus. It is found in the cytoplasm. Functionally, plays a role in the regulation of lipogenesis, especially in lactating mammary gland. Important for the biosynthesis of triglycerides with medium-length fatty acid chains. May modulate lipogenesis by interacting with MID1IP1 and preventing its interaction with ACACA. May function as transcriptional coactivator. May modulate the transcription factor activity of THRB. The sequence is that of Thyroid hormone-inducible hepatic protein (THRSP) from Homo sapiens (Human).